The sequence spans 423 residues: MTDLLSRAHADALDAADPLRSLRDAFVFPQHGDRDQTYLVGNSLGLQPRAARAMVDEVLDQWGTLGVEGHFTGPTQWLTYHQLVRDALARVVGAQPGEVVAMNTLSVNLHLMMASFYRPTHERGAILIEAGAFPSDRHAVESQLRLRGLDPATHLIEVEADEPNGTLSMAAIADAIAQHGPRLALVLWPGIQYRTGQAFDLAEIVRLARAQGAAVGCDLAHAVGNIPLTLHDDGVDFAVWCNYKYLNAGPGAVGGCFVHERHANSDLPRIAGWWGHEQQTRFRMDPQFVPSPGAEGWQLSNPPVLALAPLRASLTLFDQAGMAALRAKSERLTGHLEQLIRARVPQVLQIVTPAEPMRRGCQLSLRVAGGRAQGRSLFEHLHAAGVLGDWREPDVIRIAPVPLYNRFSDLHTFVGQVEAWAAA.

Pyridoxal 5'-phosphate-binding positions include leucine 105, serine 106, 133–136 (FPSD), aspartate 218, histidine 221, and tyrosine 243. Lysine 244 carries the post-translational modification N6-(pyridoxal phosphate)lysine. Pyridoxal 5'-phosphate is bound by residues tryptophan 273 and asparagine 301.

It belongs to the kynureninase family. Homodimer. Pyridoxal 5'-phosphate serves as cofactor.

The catalysed reaction is L-kynurenine + H2O = anthranilate + L-alanine + H(+). The enzyme catalyses 3-hydroxy-L-kynurenine + H2O = 3-hydroxyanthranilate + L-alanine + H(+). It functions in the pathway amino-acid degradation; L-kynurenine degradation; L-alanine and anthranilate from L-kynurenine: step 1/1. It participates in cofactor biosynthesis; NAD(+) biosynthesis; quinolinate from L-kynurenine: step 2/3. Its function is as follows. Catalyzes the cleavage of L-kynurenine (L-Kyn) and L-3-hydroxykynurenine (L-3OHKyn) into anthranilic acid (AA) and 3-hydroxyanthranilic acid (3-OHAA), respectively. This chain is Kynureninase, found in Xanthomonas oryzae pv. oryzae (strain PXO99A).